The primary structure comprises 148 residues: Lysozyme C (148 aa).

The first 18 residues, 1 to 18 (MKALIVLGLVLLSVTVQG), serve as a signal peptide directing secretion. The C-type lysozyme domain maps to 19-148 (KVFERCELAR…VRQYVQGCGV (130 aa)). Intrachain disulfides connect cysteine 24/cysteine 146, cysteine 48/cysteine 134, cysteine 83/cysteine 99, and cysteine 95/cysteine 113. Active-site residues include glutamate 53 and aspartate 71.

The protein belongs to the glycosyl hydrolase 22 family. In terms of assembly, monomer.

The protein localises to the secreted. The catalysed reaction is Hydrolysis of (1-&gt;4)-beta-linkages between N-acetylmuramic acid and N-acetyl-D-glucosamine residues in a peptidoglycan and between N-acetyl-D-glucosamine residues in chitodextrins.. Its function is as follows. Lysozymes have primarily a bacteriolytic function; those in tissues and body fluids are associated with the monocyte-macrophage system and enhance the activity of immunoagents. This Homo sapiens (Human) protein is Lysozyme C (LYZ).